The following is a 436-amino-acid chain: Bystin (436 aa).

The residue at position 145 (Thr-145) is a Phosphothreonine. Phosphoserine occurs at positions 148 and 152.

This sequence belongs to the bystin family.

The protein resides in the nucleus. The protein localises to the nucleolus. Its function is as follows. Required for processing of 20S pre-rRNA precursor and biogenesis of 40S ribosomal subunits. This is Bystin (bys) from Drosophila melanogaster (Fruit fly).